We begin with the raw amino-acid sequence, 179 residues long: ATP synthase subunit delta (179 aa).

This sequence belongs to the ATPase delta chain family. F-type ATPases have 2 components, F(1) - the catalytic core - and F(0) - the membrane proton channel. F(1) has five subunits: alpha(3), beta(3), gamma(1), delta(1), epsilon(1). F(0) has three main subunits: a(1), b(2) and c(10-14). The alpha and beta chains form an alternating ring which encloses part of the gamma chain. F(1) is attached to F(0) by a central stalk formed by the gamma and epsilon chains, while a peripheral stalk is formed by the delta and b chains.

It is found in the cell inner membrane. F(1)F(0) ATP synthase produces ATP from ADP in the presence of a proton or sodium gradient. F-type ATPases consist of two structural domains, F(1) containing the extramembraneous catalytic core and F(0) containing the membrane proton channel, linked together by a central stalk and a peripheral stalk. During catalysis, ATP synthesis in the catalytic domain of F(1) is coupled via a rotary mechanism of the central stalk subunits to proton translocation. Its function is as follows. This protein is part of the stalk that links CF(0) to CF(1). It either transmits conformational changes from CF(0) to CF(1) or is implicated in proton conduction. The protein is ATP synthase subunit delta of Delftia acidovorans (strain DSM 14801 / SPH-1).